Reading from the N-terminus, the 311-residue chain is Aspartate carbamoyltransferase catalytic subunit (311 aa).

Residues Arg-55 and Thr-56 each coordinate carbamoyl phosphate. Lys-85 contacts L-aspartate. Carbamoyl phosphate is bound by residues Arg-106, His-135, and Gln-138. L-aspartate is bound by residues Arg-168 and Arg-230. Positions 268 and 269 each coordinate carbamoyl phosphate.

It belongs to the aspartate/ornithine carbamoyltransferase superfamily. ATCase family. In terms of assembly, heterododecamer (2C3:3R2) of six catalytic PyrB chains organized as two trimers (C3), and six regulatory PyrI chains organized as three dimers (R2).

The catalysed reaction is carbamoyl phosphate + L-aspartate = N-carbamoyl-L-aspartate + phosphate + H(+). It participates in pyrimidine metabolism; UMP biosynthesis via de novo pathway; (S)-dihydroorotate from bicarbonate: step 2/3. Catalyzes the condensation of carbamoyl phosphate and aspartate to form carbamoyl aspartate and inorganic phosphate, the committed step in the de novo pyrimidine nucleotide biosynthesis pathway. The sequence is that of Aspartate carbamoyltransferase catalytic subunit from Baumannia cicadellinicola subsp. Homalodisca coagulata.